The sequence spans 361 residues: Peptide chain release factor 1 (361 aa).

Glutamine 235 is modified (N5-methylglutamine).

Belongs to the prokaryotic/mitochondrial release factor family. In terms of processing, methylated by PrmC. Methylation increases the termination efficiency of RF1.

The protein resides in the cytoplasm. Its function is as follows. Peptide chain release factor 1 directs the termination of translation in response to the peptide chain termination codons UAG and UAA. The polypeptide is Peptide chain release factor 1 (Chlamydia abortus (strain DSM 27085 / S26/3) (Chlamydophila abortus)).